Here is a 345-residue protein sequence, read N- to C-terminus: Nuclear distribution protein nudE-like 1 (345 aa).

Residues 28–190 (QSFQEARDEL…LAVRERQQEV (163 aa)) adopt a coiled-coil conformation. The self-association stretch occupies residues 56-166 (VQAEQRNRDL…LDEKESLLVS (111 aa)). Residues 64–189 (DLQADNQRLK…ELAVRERQQE (126 aa)) are interaction with KATNB1. The interval 114 to 133 (YVRELEQANDDLERAKRATI) is required for interaction with PAFAH1B1. The segment at 175–345 (RDLRQELAVR…SAPGMLPLSV (171 aa)) is interaction with CENPF. Positions 189-256 (EVTRKSAPSS…SARISALNIV (68 aa)) are interaction with YWHAE. The interaction with NEFL stretch occupies residues 191–345 (TRKSAPSSPT…SAPGMLPLSV (155 aa)). The segment at 195–256 (APSSPTLDCE…SARISALNIV (62 aa)) is interaction with KATNA1. Ser215 carries the post-translational modification Phosphoserine. Residues 217–240 (PATPVGKGTENSFPSPKAIPNGFG) are disordered. Thr219 is modified (phosphothreonine). Ser231 is subject to Phosphoserine. Residues 241–280 (TSPLTPSARISALNIVGDLLRKVGALESKLAACRNFAKDQ) are interaction with DISC1. Ser242 is modified (phosphoserine; by CDK1). Thr245 bears the Phosphothreonine; by CDK1 and MAPK1 mark. Residues 256 to 291 (VGDLLRKVGALESKLAACRNFAKDQASRKSYVPGSV) are required for localization to the centrosome and interaction with dynein, dynactin, tubulin gamma, PCM1 and PCNT. Cys273 is lipidated: S-palmitoyl cysteine; by ZDHHC2, ZDHHC3 and ZDHHC7. The tract at residues 314-345 (KGAVNGFDPAPPPPGLGSSRPSSAPGMLPLSV) is disordered. The span at 329-339 (LGSSRPSSAPG) shows a compositional bias: low complexity. Position 344 is a phosphoserine (Ser344).

This sequence belongs to the nudE family. As to quaternary structure, interacts with PLEKHM1 (via N- and C-terminus). Interacts with dynactin, PCM1 and PCNT. Interacts (via C-terminus) with CENPF. Self-associates. Interacts with DISC1, dynein, tubulin gamma, KATNA1, KATNB1, microtubules, PAFAHB1 and YWHAE. Interacts directly with NEFL and indirectly with NEFH. Interacts with ZNF365. Interacts with GTP-bound RAB9A; the interaction may lead to RAB9A-dynein motor tethering. Phosphorylated by CDK1 and MAPK1. Phosphorylated in mitosis. Phosphorylated by CDK5. Phosphorylation by CDK5 promotes interaction with KATNA1 and YWHAE. Post-translationally, palmitoylation at Cys-273 reduces affinity for dynein. In terms of tissue distribution, expressed in brain, liver, lung and testis (at protein level). Expressed in brain, epididymis, eye, heart, kidney, large intestine, liver, ovary, pancreas, prostate, skeletal muscle, smooth muscle, spleen, submaxillary gland, testis, thymus and thyroid. Within the brain expression is pronounced in the cortex, hippocampus, olfactory bulb, striatum, thalamic and hypothalamic structures and in the molecular layer of the cerebellum. Largely excluded from cortical progenitor cells which express NDE1.

The protein localises to the cytoplasm. Its subcellular location is the cytoskeleton. It localises to the microtubule organizing center. It is found in the centrosome. The protein resides in the chromosome. The protein localises to the centromere. Its subcellular location is the kinetochore. It localises to the spindle. Its function is as follows. Required for organization of the cellular microtubule array and microtubule anchoring at the centrosome. May regulate microtubule organization at least in part by targeting the microtubule severing protein KATNA1 to the centrosome. Also positively regulates the activity of the minus-end directed microtubule motor protein dynein. May enhance dynein-mediated microtubule sliding by targeting dynein to the microtubule plus ends. Required for several dynein- and microtubule-dependent processes such as the maintenance of Golgi integrity, the centripetal motion of secretory vesicles and the coupling of the nucleus and centrosome. Also required during brain development for the migration of newly formed neurons from the ventricular/subventricular zone toward the cortical plate. Plays a role, together with DISC1, in the regulation of neurite outgrowth. Required for mitosis in some cell types but appears to be dispensible for mitosis in cortical neuronal progenitors, which instead requires NDE1. Facilitates the polymerization of neurofilaments from the individual subunits NEFH and NEFL. Positively regulates lysosome peripheral distribution and ruffled border formation in osteoclasts. Plays a role, together with DISC1, in the regulation of neurite outgrowth. May act as a RAB9A/B effector that tethers RAB9-associated late endosomes to the dynein motor for their retrograde transport to the trans-Golgi network. This is Nuclear distribution protein nudE-like 1 from Mus musculus (Mouse).